A 1186-amino-acid chain; its full sequence is Tricalbin-1 (1186 aa).

Positions 1 to 50 (MAKEDTGVTAPKKPETAQVANINGIDKLEPPKTKEETESSKSVSSEKAAH) are disordered. Topologically, residues 1–106 (MAKEDTGVTA…NIIPDSLYGD (106 aa)) are cytoplasmic. A compositionally biased stretch (basic and acidic residues) spans 26-39 (DKLEPPKTKEETES). The helical transmembrane segment at 107-127 (WYHSVAIFFIGGVASFALGHY) threads the bilayer. K128 is a topological domain (extracellular). A helical transmembrane segment spans residues 129-149 (FSMGSAFFVIVITSLLYRTSA). The Cytoplasmic portion of the chain corresponds to 150-1186 (KKYRGSIREL…HEMGEEETKF (1037 aa)). Residues 172–375 (DYESLEWLNA…PPFSLQLNIP (204 aa)) enclose the SMP-LTD domain. C2 domains are found at residues 366 to 487 (PPFS…RNLK), 512 to 636 (EKKL…IKIT), and 640 to 757 (RPVR…DKYE). Positions 795–822 (LEEIQDLDKVNKKKKALELRKSAIDEKK) form a coiled coil. The C2 4 domain maps to 976-1094 (PIDTKQLPAN…KVEGTTELDV (119 aa)). Phosphoserine is present on S1000. D1008, D1014, D1064, D1066, S1069, and D1072 together coordinate Ca(2+).

The protein belongs to the tricalbin family. In terms of assembly, interacts with TCB2 via its C-terminal domain. Ca(2+) serves as cofactor.

The protein resides in the cell membrane. Its subcellular location is the endoplasmic reticulum membrane. In terms of biological role, may play a role in membrane trafficking. This is Tricalbin-1 (TCB1) from Saccharomyces cerevisiae (strain ATCC 204508 / S288c) (Baker's yeast).